A 277-amino-acid chain; its full sequence is Caspase-3 (277 aa).

N-acetylmethionine is present on Met-1. Propeptides lie at residues 1–9 (MENTENSVD) and 10–28 (SKSI…ESMD). Position 11 is an N6-acetyllysine (Lys-11). A Phosphoserine modification is found at Ser-26. Active-site residues include His-121 and Cys-163. S-nitrosocysteine; in inhibited form is present on Cys-163. Residue Arg-207 is modified to (Microbial infection) ADP-riboxanated arginine.

The protein belongs to the peptidase C14A family. In terms of assembly, heterotetramer that consists of two anti-parallel arranged heterodimers, each one formed by a 17 kDa (p17) and a 12 kDa (p12) subunit. Interacts with BIRC6/bruce. In terms of processing, cleavage by granzyme B, caspase-6, caspase-8 and caspase-10 generates the two active subunits. Additional processing of the propeptides is likely due to the autocatalytic activity of the activated protease. Active heterodimers between the small subunit of caspase-7 protease and the large subunit of caspase-3 also occur and vice versa. S-nitrosylated on its catalytic site cysteine in unstimulated human cell lines and denitrosylated upon activation of the Fas apoptotic pathway, associated with an increase in intracellular caspase activity. Fas therefore activates caspase-3 not only by inducing the cleavage of the caspase zymogen to its active subunits, but also by stimulating the denitrosylation of its active site thiol. Post-translationally, ubiquitinated by BIRC6; this activity is inhibited by DIABLO/SMAC. In terms of processing, (Microbial infection) ADP-riboxanation by C.violaceum CopC blocks CASP3 processing, preventing CASP3 activation and ability to recognize and cleave substrates. Highly expressed in lung, spleen, heart, liver and kidney. Moderate levels in brain and skeletal muscle, and low in testis. Also found in many cell lines, highest expression in cells of the immune system.

The protein localises to the cytoplasm. It carries out the reaction Strict requirement for an Asp residue at positions P1 and P4. It has a preferred cleavage sequence of Asp-Xaa-Xaa-Asp-|- with a hydrophobic amino-acid residue at P2 and a hydrophilic amino-acid residue at P3, although Val or Ala are also accepted at this position.. Inhibited by isatin sulfonamides. Inhibited by BIRC6; following inhibition of BIRC6-caspase binding by DIABLO/SMAC, BIRC6 is subjected to caspase cleavage, leading to an increase in active caspases. Functionally, thiol protease that acts as a major effector caspase involved in the execution phase of apoptosis. Following cleavage and activation by initiator caspases (CASP8, CASP9 and/or CASP10), mediates execution of apoptosis by catalyzing cleavage of many proteins. At the onset of apoptosis, it proteolytically cleaves poly(ADP-ribose) polymerase PARP1 at a '216-Asp-|-Gly-217' bond. Cleaves and activates sterol regulatory element binding proteins (SREBPs) between the basic helix-loop-helix leucine zipper domain and the membrane attachment domain. Cleaves and activates caspase-6, -7 and -9 (CASP6, CASP7 and CASP9, respectively). Cleaves and inactivates interleukin-18 (IL18). Involved in the cleavage of huntingtin. Triggers cell adhesion in sympathetic neurons through RET cleavage. Cleaves and inhibits serine/threonine-protein kinase AKT1 in response to oxidative stress. Acts as an inhibitor of type I interferon production during virus-induced apoptosis by mediating cleavage of antiviral proteins CGAS, IRF3 and MAVS, thereby preventing cytokine overproduction. Also involved in pyroptosis by mediating cleavage and activation of gasdermin-E (GSDME). Cleaves XRCC4 and phospholipid scramblase proteins XKR4, XKR8 and XKR9, leading to promote phosphatidylserine exposure on apoptotic cell surface. Cleaves BIRC6 following inhibition of BIRC6-caspase binding by DIABLO/SMAC. The chain is Caspase-3 (CASP3) from Homo sapiens (Human).